The following is a 143-amino-acid chain: Transcriptional regulator MraZ (143 aa).

2 consecutive SpoVT-AbrB domains span residues 5-47 (EYSH…PMPV) and 76-119 (AMEA…SDEN).

The protein belongs to the MraZ family. As to quaternary structure, forms oligomers.

Its subcellular location is the cytoplasm. The protein localises to the nucleoid. In Leuconostoc citreum (strain KM20), this protein is Transcriptional regulator MraZ.